A 449-amino-acid chain; its full sequence is Glucose-6-phosphate isomerase (449 aa).

The Proton donor role is filled by Glu290. Active-site residues include His311 and Lys425.

It belongs to the GPI family.

The protein resides in the cytoplasm. The catalysed reaction is alpha-D-glucose 6-phosphate = beta-D-fructose 6-phosphate. It functions in the pathway carbohydrate biosynthesis; gluconeogenesis. It participates in carbohydrate degradation; glycolysis; D-glyceraldehyde 3-phosphate and glycerone phosphate from D-glucose: step 2/4. Functionally, catalyzes the reversible isomerization of glucose-6-phosphate to fructose-6-phosphate. In Clostridium tetani (strain Massachusetts / E88), this protein is Glucose-6-phosphate isomerase.